The primary structure comprises 40 residues: MADTTGRIPLWIIGTVTGILVIGLIGIFFYGSYSGLGSSL.

The chain crosses the membrane as a helical span at residues 8 to 28 (IPLWIIGTVTGILVIGLIGIF).

It belongs to the PsbJ family. PSII is composed of 1 copy each of membrane proteins PsbA, PsbB, PsbC, PsbD, PsbE, PsbF, PsbH, PsbI, PsbJ, PsbK, PsbL, PsbM, PsbT, PsbX, PsbY, PsbZ, Psb30/Ycf12, at least 3 peripheral proteins of the oxygen-evolving complex and a large number of cofactors. It forms dimeric complexes.

It localises to the plastid. It is found in the chloroplast thylakoid membrane. In terms of biological role, one of the components of the core complex of photosystem II (PSII). PSII is a light-driven water:plastoquinone oxidoreductase that uses light energy to abstract electrons from H(2)O, generating O(2) and a proton gradient subsequently used for ATP formation. It consists of a core antenna complex that captures photons, and an electron transfer chain that converts photonic excitation into a charge separation. The sequence is that of Photosystem II reaction center protein J from Eucalyptus globulus subsp. globulus (Tasmanian blue gum).